We begin with the raw amino-acid sequence, 318 residues long: Lymphatic vessel endothelial hyaluronic acid receptor 1 (318 aa).

The N-terminal stretch at 1-23 is a signal peptide; that stretch reads MLQHTSLVLLLASIWTTRHPVQG. Residues 24–234 are Extracellular-facing; it reads ADLVQDLSIS…EAAGFGGVPT (211 aa). The region spanning 39–129 is the Link domain; it reads GVALVGRNKN…SQKFKAYCHN (91 aa). Asparagine 52 is a glycosylation site (N-linked (GlcNAc...) asparagine). 2 cysteine pairs are disulfide-bonded: cysteine 60–cysteine 127 and cysteine 84–cysteine 105. An N-linked (GlcNAc...) asparagine glycan is attached at asparagine 129. Residues 235 to 255 traverse the membrane as a helical segment; that stretch reads ALLVLALLFFGAAAVLAVCYV. Residues 256–318 lie on the Cytoplasmic side of the membrane; that stretch reads KRYVKAFPFT…TTVRCLEAEV (63 aa). A compositionally biased stretch (basic and acidic residues) spans 284 to 305; the sequence is ADDVNANEESKKTIKNPEEAKS. The segment at 284-318 is disordered; sequence ADDVNANEESKKTIKNPEEAKSPPKTTVRCLEAEV.

In terms of assembly, homodimer; disulfide-linked. Interacts with PDGFB and IGFBP3. Forms a transient ternary complex with PDGFB and PDGFRB in TGN. O-glycosylated.

Its subcellular location is the membrane. Its function is as follows. Ligand-specific transporter trafficking between intracellular organelles (TGN) and the plasma membrane. Plays a role in autocrine regulation of cell growth mediated by growth regulators containing cell surface retention sequence binding (CRS). May act as a hyaluronan (HA) transporter, either mediating its uptake for catabolism within lymphatic endothelial cells themselves, or its transport into the lumen of afferent lymphatic vessels for subsequent re-uptake and degradation in lymph nodes. Binds to pericelluar hyaluronan matrices deposited on the surface of leukocytes and facilitates cell adhesion and migration through lymphatic endothelium. This is Lymphatic vessel endothelial hyaluronic acid receptor 1 (Lyve1) from Mus musculus (Mouse).